The chain runs to 267 residues: Probable 6-oxopurine nucleoside phosphorylase (267 aa).

Phosphate contacts are provided by residues Ser-10, 50–51, and 83–84; these read RH and SA. Residue Met-188 participates in substrate binding. A phosphate-binding site is contributed by Thr-189. 212–214 lines the substrate pocket; that stretch reads NYA.

It belongs to the PNP/MTAP phosphorylase family. MTAP subfamily. Homohexamer. Dimer of a homotrimer.

It carries out the reaction a purine D-ribonucleoside + phosphate = a purine nucleobase + alpha-D-ribose 1-phosphate. It catalyses the reaction guanosine + phosphate = alpha-D-ribose 1-phosphate + guanine. The enzyme catalyses inosine + phosphate = alpha-D-ribose 1-phosphate + hypoxanthine. It functions in the pathway purine metabolism; purine nucleoside salvage. Its function is as follows. Purine nucleoside phosphorylase which is highly specific for 6-oxopurine nucleosides. Cleaves guanosine or inosine to respective bases and sugar-1-phosphate molecules. Involved in purine salvage. This chain is Probable 6-oxopurine nucleoside phosphorylase, found in Thermococcus kodakarensis (strain ATCC BAA-918 / JCM 12380 / KOD1) (Pyrococcus kodakaraensis (strain KOD1)).